A 541-amino-acid chain; its full sequence is Arginine--tRNA ligase (541 aa).

Positions 119–129 (ANPTGPLHIGH) match the 'HIGH' region motif.

The protein belongs to the class-I aminoacyl-tRNA synthetase family. Monomer.

It is found in the cytoplasm. The enzyme catalyses tRNA(Arg) + L-arginine + ATP = L-arginyl-tRNA(Arg) + AMP + diphosphate. The polypeptide is Arginine--tRNA ligase (argS) (Helicobacter pylori (strain J99 / ATCC 700824) (Campylobacter pylori J99)).